The chain runs to 187 residues: UPF0301 protein CT0663 (187 aa).

It belongs to the UPF0301 (AlgH) family.

In Chlorobaculum tepidum (strain ATCC 49652 / DSM 12025 / NBRC 103806 / TLS) (Chlorobium tepidum), this protein is UPF0301 protein CT0663.